Here is a 311-residue protein sequence, read N- to C-terminus: Probable manganese-dependent inorganic pyrophosphatase (311 aa).

Mn(2+) is bound by residues histidine 9, aspartate 13, aspartate 15, aspartate 77, histidine 99, and aspartate 151.

It belongs to the PPase class C family. It depends on Mn(2+) as a cofactor.

It is found in the cytoplasm. The catalysed reaction is diphosphate + H2O = 2 phosphate + H(+). The protein is Probable manganese-dependent inorganic pyrophosphatase of Streptococcus equi subsp. equi (strain 4047).